We begin with the raw amino-acid sequence, 684 residues long: Kinesin-like protein KIN-13B (684 aa).

2 disordered regions span residues 1–31 (MSGRQRSVAAAVHHQRQLSDNPLDMSSSNGR) and 71–103 (GNEFFGEPTTPQYGARPTNQRKNNDESEFSPGL). Composition is skewed to polar residues over residues 18-31 (LSDNPLDMSSSNGR) and 79-91 (TTPQYGARPTNQR). One can recognise a Kinesin motor domain in the interval 169-492 (KIKVVVRKRP…LRYADRVKSL (324 aa)). Residue 258-265 (GQTGSGKT) participates in ATP binding. A disordered region spans residues 574-594 (KPTIQMKSRDMPRPDMKKSNS). A compositionally biased stretch (basic and acidic residues) spans 580–594 (KSRDMPRPDMKKSNS). The stretch at 596-626 (DNLNALLQEEEDLVNAHRKQVEDTMNIVKEE) forms a coiled coil.

This sequence belongs to the TRAFAC class myosin-kinesin ATPase superfamily. Kinesin family. KIN-13 subfamily.

Functionally, acts redundantly with KIN13A to modulate cell wall synthesis and cell expansion via the THE1 pathway. The chain is Kinesin-like protein KIN-13B from Arabidopsis thaliana (Mouse-ear cress).